A 39-amino-acid polypeptide reads, in one-letter code: Protein YkiC (39 aa).

A helical transmembrane segment spans residues 13-35; sequence LLSAKLCNCTQAIMTHIIASFLA.

It localises to the cell inner membrane. This chain is Protein YkiC, found in Escherichia coli (strain K12).